A 478-amino-acid chain; its full sequence is Adenosylhomocysteinase (478 aa).

3 residues coordinate substrate: threonine 56, aspartate 139, and glutamate 201. Threonine 202 to threonine 204 contributes to the NAD(+) binding site. Substrate contacts are provided by lysine 231 and aspartate 235. Residues asparagine 236, glycine 265–glycine 270, glutamate 288, asparagine 323, isoleucine 344–histidine 346, and asparagine 392 each bind NAD(+).

This sequence belongs to the adenosylhomocysteinase family. The cofactor is NAD(+).

The protein localises to the cytoplasm. It catalyses the reaction S-adenosyl-L-homocysteine + H2O = L-homocysteine + adenosine. The protein operates within amino-acid biosynthesis; L-homocysteine biosynthesis; L-homocysteine from S-adenosyl-L-homocysteine: step 1/1. Functionally, may play a key role in the regulation of the intracellular concentration of adenosylhomocysteine. This Corynebacterium diphtheriae (strain ATCC 700971 / NCTC 13129 / Biotype gravis) protein is Adenosylhomocysteinase.